The following is a 102-amino-acid chain: Small ribosomal subunit protein uS10 (102 aa).

Belongs to the universal ribosomal protein uS10 family. As to quaternary structure, part of the 30S ribosomal subunit.

Functionally, involved in the binding of tRNA to the ribosomes. The chain is Small ribosomal subunit protein uS10 from Enterococcus faecalis (strain ATCC 700802 / V583).